The primary structure comprises 472 residues: UDP-N-acetylmuramate--L-alanine ligase (472 aa).

121–127 (GTHGKTT) lines the ATP pocket.

The protein belongs to the MurCDEF family.

The protein localises to the cytoplasm. The enzyme catalyses UDP-N-acetyl-alpha-D-muramate + L-alanine + ATP = UDP-N-acetyl-alpha-D-muramoyl-L-alanine + ADP + phosphate + H(+). It participates in cell wall biogenesis; peptidoglycan biosynthesis. Cell wall formation. The protein is UDP-N-acetylmuramate--L-alanine ligase of Hahella chejuensis (strain KCTC 2396).